A 182-amino-acid polypeptide reads, in one-letter code: Ribosome hibernation promotion factor (182 aa).

The protein belongs to the HPF/YfiA ribosome-associated protein family. Long HPF subfamily. In terms of assembly, interacts with 100S ribosomes.

Its subcellular location is the cytoplasm. Functionally, required for dimerization of active 70S ribosomes into 100S ribosomes in stationary phase; 100S ribosomes are translationally inactive and sometimes present during exponential growth. This is Ribosome hibernation promotion factor from Streptococcus pyogenes serotype M6 (strain ATCC BAA-946 / MGAS10394).